A 754-amino-acid polypeptide reads, in one-letter code: MKITTVGVCIISGIFPLLILPQLPGTLTLAFLTLFACVLAFIPVKTVRYIALTLLFFVWGILSAKQILWAGETLTGATQDAIVEITATDGMTTHYGQITHLQGRRIFPASGLVMYGEYLPQAVCAGQQWSMKLKVRAVHGQLNDGGFDSQRYAIAQHQPLTGRFLQASVIEPNCSLRAQYLASLQTTLQPYPWNAVILGLGMGERLSVPKEIKNIMRDTGTAHLMAISGLHIAFAALLAAGLIRSGQIFLPGRWIHWQIPLIGGICCAAFYAWLTGMQPPALRTMVALATWGMLKLSGRQWSGWDVWICCLAAILLMDPVAILSQSLWLSAAAVAALIFWYQWFPCPEWQLPPVLRAVVSLIHLQLGITLLLMPVQIVIFHGISLTSFIANLLAIPLVTFITVPLILAAMVVHLSGPLILEQGLWFLADRSLALLFWGLKSLPEGWINIAECWQWLSFSPWFLLVVWRLNAWRTLPAMCVAGGLLMCWPLWQKPRPDEWQLYMLDVGQGLAMVIARNGKAILYDTGLAWPEGDSGQQLIIPWLHWHNLEPEGVILSHEHLDHRGGLDSILHIWPMLWIRSPLNWEHHQPCVRGEAWQWQGLRFSAHWPLQGSNDKGNNHSCVVKVDDGTNSILLTGDIEAPAEQKMLSRYWQQVQATLLQVPHHGSNTSSSLPLIQRVNGKVALASASRYNAWRLPSNKVKHRYQLQGYQWIDTPHQGQTTVNFSAQGWRISSLREQILPRWYHQWFGVPVDNG.

The next 10 membrane-spanning stretches (helical) occupy residues I3–L23, P24–V44, I50–A70, H223–I243, W254–L274, V320–W340, L370–A390, L392–V412, W446–V466, and A471–W491.

To B.subtilis ComEC, N.gonorrhoeae ComA, and H.influenzae Rec2.

The protein localises to the cell membrane. This is an uncharacterized protein from Escherichia coli (strain K12).